A 470-amino-acid polypeptide reads, in one-letter code: MSAKTLYDKLWESHVVHTEQDGGVLLYIDRQLLHEVTSPQAFSGLRAAGRKAWRIDANIATADHNVPTTDRAAGIADATSRLQVDTLDRNCAEFGIEEFGMHDKRQGIVHVIAPEQGLTLPGMTVVCGDSHTATHGALGALAFGIGTTEVEHVLATQCLWARKSRSMRIWVEGELGNGVTAKDLVLAIIGRIGTAGGTGYAIEFAGPAVHALSVEGRMTLCNMAIEAGARSGMVGVDAVTIDYLRGRPYAPVGKIWDQAVAVWGELHSDPDAQFDAEIRLEATDVAPQVTWGTSPEMVVDISARVPDPALEKDPVRRKGWSDALAYMDLAAATPISSIALDKVFIGSCTNARIEDLRAAAAVARGHHKAASVKAVLVVPGSGLVKAQAEAEGLDRIFRDAGFEWREPGCSMCLAMNADRLEPGERCASTSNRNFEGRQGAGGRTHLVSPAMAAAAAIAGHFVDVRDWIMH.

3 residues coordinate [4Fe-4S] cluster: C348, C409, and C412.

This sequence belongs to the aconitase/IPM isomerase family. LeuC type 1 subfamily. In terms of assembly, heterodimer of LeuC and LeuD. It depends on [4Fe-4S] cluster as a cofactor.

It catalyses the reaction (2R,3S)-3-isopropylmalate = (2S)-2-isopropylmalate. It participates in amino-acid biosynthesis; L-leucine biosynthesis; L-leucine from 3-methyl-2-oxobutanoate: step 2/4. Functionally, catalyzes the isomerization between 2-isopropylmalate and 3-isopropylmalate, via the formation of 2-isopropylmaleate. The polypeptide is 3-isopropylmalate dehydratase large subunit (Acidithiobacillus ferrooxidans (strain ATCC 23270 / DSM 14882 / CIP 104768 / NCIMB 8455) (Ferrobacillus ferrooxidans (strain ATCC 23270))).